We begin with the raw amino-acid sequence, 1930 residues long: Myosin-16 (1930 aa).

The Myosin N-terminal SH3-like domain maps to 35–84; that stretch reads DIKKSCWVKDEKEGFIAGEIQSEQGDQVTVKTVNNQTVTVKKDDVQQMNP. In terms of domain architecture, Myosin motor spans 88–774; the sequence is YQASDMADMT…ILAKLEDMRD (687 aa). 181–188 is an ATP binding site; that stretch reads GESGAGKT. 2 actin-binding regions span residues 652 to 674 and 753 to 767; these read LNKL…VPNE and KIGH…GILA. The IQ domain occupies 777–806; it reads LAKIMTMLQCRLRGFLMRIEFKKMLERRIG. Positions 835-1921 form a coiled coil; the sequence is LLNVARQEEE…ALNKLRTRHR (1087 aa). The interval 1116-1137 is disordered; the sequence is EELEAERSMRAKVEKQRSDLSR. Residues 1120 to 1137 are compositionally biased toward basic and acidic residues; sequence AERSMRAKVEKQRSDLSR.

It belongs to the TRAFAC class myosin-kinesin ATPase superfamily. Myosin family.

It localises to the cytoplasm. It is found in the myofibril. May play a role in masticatory muscles contraction. This Canis lupus familiaris (Dog) protein is Myosin-16.